The primary structure comprises 256 residues: Trans-aconitate 2-methyltransferase (256 aa).

This sequence belongs to the methyltransferase superfamily. Tam family.

The protein localises to the cytoplasm. It catalyses the reaction trans-aconitate + S-adenosyl-L-methionine = (E)-3-(methoxycarbonyl)pent-2-enedioate + S-adenosyl-L-homocysteine. In terms of biological role, catalyzes the S-adenosylmethionine monomethyl esterification of trans-aconitate. The polypeptide is Trans-aconitate 2-methyltransferase (Rhodopseudomonas palustris (strain BisB5)).